The primary structure comprises 157 residues: MLIGFGYDVHRLVPGRPLVLGGVEIPSKRGLEGHSDADVALHALMDALLGAAGLGDIGTHFPPTDPAWAGANSLDLLRRVVGLLAEEGYRPVNCDITVVAERPKIGPYVPAMRERIGAVLGVEPRRVSIKATTNEQMGFVGREEGIAAYAVALIAGR.

Residues D8 and H10 each contribute to the a divalent metal cation site. Residues 8-10 (DVH) and 34-35 (HS) each bind 4-CDP-2-C-methyl-D-erythritol 2-phosphate. H42 is an a divalent metal cation binding site. Residues 56–58 (DIG), 132–135 (TTNE), F139, and R142 each bind 4-CDP-2-C-methyl-D-erythritol 2-phosphate.

It belongs to the IspF family. In terms of assembly, homotrimer. Requires a divalent metal cation as cofactor.

It catalyses the reaction 4-CDP-2-C-methyl-D-erythritol 2-phosphate = 2-C-methyl-D-erythritol 2,4-cyclic diphosphate + CMP. Its pathway is isoprenoid biosynthesis; isopentenyl diphosphate biosynthesis via DXP pathway; isopentenyl diphosphate from 1-deoxy-D-xylulose 5-phosphate: step 4/6. Its function is as follows. Involved in the biosynthesis of isopentenyl diphosphate (IPP) and dimethylallyl diphosphate (DMAPP), two major building blocks of isoprenoid compounds. Catalyzes the conversion of 4-diphosphocytidyl-2-C-methyl-D-erythritol 2-phosphate (CDP-ME2P) to 2-C-methyl-D-erythritol 2,4-cyclodiphosphate (ME-CPP) with a corresponding release of cytidine 5-monophosphate (CMP). The sequence is that of 2-C-methyl-D-erythritol 2,4-cyclodiphosphate synthase from Symbiobacterium thermophilum (strain DSM 24528 / JCM 14929 / IAM 14863 / T).